We begin with the raw amino-acid sequence, 1571 residues long: MPQFDESFLSDCALADRWHFYSYTVKQLPPHPSPKPNRNRNPYPSGASHDDHQHQLHHHHHQQHHHNHHRLWKTQRQSWSPRDTNNNHSLTSNNCNCNSSNTCNSISATGNTLHSIKFHRRRKYKKLARLALSTPAIPLQMDVDVDVNVTVDREFDMEMDTPVPLKNAVCHGSISSPSTPGTCSSGIGVGGGGCSSSSNNSINSGSYSTACTPPPPTHQHHSQHQQLQGTPGGSSRVGGAGAGGGGGVPPAPPSAGSSGHKNSLKGTKLARRARSFKDDLIEKISLMRTTNNTLGRSHSPHSPRTKHGTKAPPTTEEVLRSTQTLETHVKDISNALKHFRDVILKKKLEVLPGNGTVILETIASMYSVIQTYTLNENSAIMSSATLQVYQSLGKLIKLCDEVMLSEDSGECASLSNENVREVIDLLEDAVRNLVTLAQGKLKEQDQCAFRYSGSGLGGIGAAAEIMGAVTASPGASVPGTGVMRVSAAESAAQRTSLPDIALTPKERDILEQHNVNPMRGSHSTESILRDTSPPPKPPLPNRASNPPPLPPKRRSQPSASAGTVGVGCSSSTSTSNQASPLPYAQSHNISLNSDLDCSSNISLLNYGVDRLSVRSRSPDENSQCSFDSALNHSREEEDQQQQHQHLRSFPKLAAMMDEDMDKMVSYSAAIDDKTQTPLSTGGGIAGVAGGTGGAGEGVAAAASGDGETNSNRHSNESGFVSMREFRTSTQTTDYSVQSSTKSSSSNSEIAFSISESTAVGSSSEYQQISQLVSHSQRHISSSSSSCTTTTTSSSTTTGYGSSEVEQLQQQQQQQTTTTPADLAPALPPKSIQRSSLTRHDSPGVGDELDEVQSSSGWASHRSSQSEVAELRQLSPLHHLNHHPHTASAGQLQQWHSKHHSLIEGPRLQLAGSGSCSAFDQRHLDQEPPPLPIKKKHILAYMEICSASTRSIEQHRHTMHACNISRNISHSQTMNIMPMSKELSPELEMPPALPPKNYKQRKATSMVASPTLQPVIVTTPPPSPKPTLGENGSTGRPDSRMATVCEELNDAVASEDAMPEPRSPVLDSNENVSAVDDGQTFYCHSHQLPAAEMEMSEDASSADNQPITTPQVLEEQEEPTAESRPLVAVHESVKPANVDEDEEAERADMLINMLEEVNITRYLILKKREEDGPEVKGGYIDALIVHASRVQKVADNAFCEAFITTFRTFIQPIDVIEKLTHRYTYFFCQVQDNKQKAAKETFALLVRVVNDLTSTDLTSQLLSLLVEFVYQLVCSGQLYLAKLLRNKFVEKVTLYKEPKVYGFVGELGGAGSVGGAGIAGSGGCSGTAGGGNQPSLLDLKSLEIAEQMTLLDAELFTKIEIPEVLLFAKDQCEEKSPNLNKFTEHFNKMSYWARSKILRLQDAKEREKHVNKFIKIMKHLRKMNNYNSYLALLSALDSGPIRRLEWQKGITEEVRSFCALIDSSSSFRAYRQALAETNPPCIPYIGLILQDLTFVHVGNQDYLSKGVINFSKRWQQYNIIDNMKRFKKCAYPFRRNERIIRFFDNFKDFMGEEEMWQISEKIKPRGRRPVNY.

Disordered stretches follow at residues 28–85 (LPPH…RDTN), 202–271 (INSG…KLAR), and 287–316 (MRTT…PTTE). Residues 55–73 (QLHHHHHQQHHHNHHRLWK) show a composition bias toward basic residues. Positions 74–83 (TQRQSWSPRD) are enriched in polar residues. Gly residues predominate over residues 230-248 (TPGGSSRVGGAGAGGGGGV). A compositionally biased stretch (polar residues) spans 287-297 (MRTTNNTLGRS). A compositionally biased stretch (basic residues) spans 298–309 (HSPHSPRTKHGT). Residues Ser496 and Ser523 each carry the phosphoserine modification. Disordered regions lie at residues 513–580 (HNVN…QASP), 614–646 (RSRS…HQHL), 695–719 (GEGV…ESGF), 728–747 (STQT…SSNS), 776–868 (QRHI…SEVA), and 879–898 (LNHH…HSKH). Thr524 is modified (phosphothreonine). Phosphoserine is present on Ser526. Pro residues predominate over residues 532-550 (SPPPKPPLPNRASNPPPLP). An SH3-binding motif is present at residues 546-556 (PPPLPPKRRSQ). Over residues 556–579 (QPSASAGTVGVGCSSSTSTSNQAS) the composition is skewed to low complexity. A Phosphoserine modification is found at Ser615. The segment covering 620–631 (ENSQCSFDSALN) has biased composition (polar residues). The segment covering 697-707 (GVAAAASGDGE) has biased composition (low complexity). Residues 708–718 (TNSNRHSNESG) show a composition bias toward polar residues. 2 stretches are compositionally biased toward low complexity: residues 735-747 (SVQS…SSNS) and 780-824 (SSSS…DLAP). An SH3-binding motif is present at residues 820–831 (ADLAPALPPKSI). Over residues 851-866 (VQSSSGWASHRSSQSE) the composition is skewed to polar residues. Short sequence motifs (SH3-binding) lie at residues 924–935 (DQEPPPLPIKKK) and 986–997 (LEMPPALPPKNY). The interval 1013-1038 (PVIVTTPPPSPKPTLGENGSTGRPDS) is disordered. Positions 1170-1292 (DGPEVKGGYI…LRNKFVEKVT (123 aa)) constitute an N-terminal Ras-GEF domain. A Ras-GEF domain is found at 1339 to 1564 (KSLEIAEQMT…WQISEKIKPR (226 aa)).

As to expression, ubiquitous.

In terms of biological role, guanine nucleotide-releasing protein that binds to SH3 domain of Crk. Transduces signals from Crk to activate RAS. Also involved in MAPK activation. The polypeptide is Guanine nucleotide-releasing factor 2 (C3G) (Drosophila melanogaster (Fruit fly)).